The following is a 114-amino-acid chain: Probable 4-amino-4-deoxy-L-arabinose-phosphoundecaprenol flippase subunit ArnE (114 aa).

The next 3 membrane-spanning stretches (helical) occupy residues 41–61 (PWLI…IYLL), 64–84 (LPLS…LIGS), and 94–114 (YHNW…GGLL). Residues 53 to 112 (GMLLWIYLLQRLPLSMAYPMLSINLVLVLIGSRLFFHEQISYHNWLGAGAIIIGALLLGG) form the EamA domain.

It belongs to the ArnE family. As to quaternary structure, heterodimer of ArnE and ArnF.

The protein localises to the cell inner membrane. It functions in the pathway bacterial outer membrane biogenesis; lipopolysaccharide biosynthesis. Its function is as follows. Translocates 4-amino-4-deoxy-L-arabinose-phosphoundecaprenol (alpha-L-Ara4N-phosphoundecaprenol) from the cytoplasmic to the periplasmic side of the inner membrane. The sequence is that of Probable 4-amino-4-deoxy-L-arabinose-phosphoundecaprenol flippase subunit ArnE from Aeromonas salmonicida (strain A449).